The primary structure comprises 418 residues: Tyrosine--tRNA ligase (418 aa).

Tyr34 lines the L-tyrosine pocket. The 'HIGH' region signature appears at 39–48 (PTADSLHLGH). 2 residues coordinate L-tyrosine: Tyr169 and Gln173. A 'KMSKS' region motif is present at residues 229–233 (KFGKS). Lys232 contacts ATP. Residues 352–418 (HNIVEILVAA…GKKKYAVLTY (67 aa)) form the S4 RNA-binding domain.

Belongs to the class-I aminoacyl-tRNA synthetase family. TyrS type 1 subfamily. Homodimer.

It is found in the cytoplasm. It catalyses the reaction tRNA(Tyr) + L-tyrosine + ATP = L-tyrosyl-tRNA(Tyr) + AMP + diphosphate + H(+). Functionally, catalyzes the attachment of tyrosine to tRNA(Tyr) in a two-step reaction: tyrosine is first activated by ATP to form Tyr-AMP and then transferred to the acceptor end of tRNA(Tyr). In Streptococcus pyogenes serotype M49 (strain NZ131), this protein is Tyrosine--tRNA ligase.